A 426-amino-acid chain; its full sequence is Histidine--tRNA ligase (426 aa).

It belongs to the class-II aminoacyl-tRNA synthetase family. Homodimer.

It is found in the cytoplasm. The catalysed reaction is tRNA(His) + L-histidine + ATP = L-histidyl-tRNA(His) + AMP + diphosphate + H(+). The polypeptide is Histidine--tRNA ligase (Colwellia psychrerythraea (strain 34H / ATCC BAA-681) (Vibrio psychroerythus)).